The following is a 227-amino-acid chain: Cytochrome c oxidase subunit 2 (227 aa).

Over 1–14 (MAHPFQTGLQDATS) the chain is Mitochondrial intermembrane. A helical membrane pass occupies residues 15–45 (PIMEELLHFHDHTLMIVFLISSLVLYIISIM). The Mitochondrial matrix portion of the chain corresponds to 46–59 (LTTKLTHTNTMDAQ). The chain crosses the membrane as a helical span at residues 60 to 87 (EVETVWTILPAIILIMIALPSLRILYMM). The Mitochondrial intermembrane portion of the chain corresponds to 88 to 227 (DEINNPSLTV…YFEKWSASML (140 aa)). 6 residues coordinate Cu cation: H161, C196, E198, C200, H204, and M207. E198 is a binding site for Mg(2+). Residue Y218 is modified to Phosphotyrosine.

The protein belongs to the cytochrome c oxidase subunit 2 family. As to quaternary structure, component of the cytochrome c oxidase (complex IV, CIV), a multisubunit enzyme composed of 14 subunits. The complex is composed of a catalytic core of 3 subunits MT-CO1, MT-CO2 and MT-CO3, encoded in the mitochondrial DNA, and 11 supernumerary subunits COX4I, COX5A, COX5B, COX6A, COX6B, COX6C, COX7A, COX7B, COX7C, COX8 and NDUFA4, which are encoded in the nuclear genome. The complex exists as a monomer or a dimer and forms supercomplexes (SCs) in the inner mitochondrial membrane with NADH-ubiquinone oxidoreductase (complex I, CI) and ubiquinol-cytochrome c oxidoreductase (cytochrome b-c1 complex, complex III, CIII), resulting in different assemblies (supercomplex SCI(1)III(2)IV(1) and megacomplex MCI(2)III(2)IV(2)). Found in a complex with TMEM177, COA6, COX18, COX20, SCO1 and SCO2. Interacts with TMEM177 in a COX20-dependent manner. Interacts with COX20. Interacts with COX16. It depends on Cu cation as a cofactor.

The protein localises to the mitochondrion inner membrane. It catalyses the reaction 4 Fe(II)-[cytochrome c] + O2 + 8 H(+)(in) = 4 Fe(III)-[cytochrome c] + 2 H2O + 4 H(+)(out). In terms of biological role, component of the cytochrome c oxidase, the last enzyme in the mitochondrial electron transport chain which drives oxidative phosphorylation. The respiratory chain contains 3 multisubunit complexes succinate dehydrogenase (complex II, CII), ubiquinol-cytochrome c oxidoreductase (cytochrome b-c1 complex, complex III, CIII) and cytochrome c oxidase (complex IV, CIV), that cooperate to transfer electrons derived from NADH and succinate to molecular oxygen, creating an electrochemical gradient over the inner membrane that drives transmembrane transport and the ATP synthase. Cytochrome c oxidase is the component of the respiratory chain that catalyzes the reduction of oxygen to water. Electrons originating from reduced cytochrome c in the intermembrane space (IMS) are transferred via the dinuclear copper A center (CU(A)) of subunit 2 and heme A of subunit 1 to the active site in subunit 1, a binuclear center (BNC) formed by heme A3 and copper B (CU(B)). The BNC reduces molecular oxygen to 2 water molecules using 4 electrons from cytochrome c in the IMS and 4 protons from the mitochondrial matrix. This Ailuropoda melanoleuca (Giant panda) protein is Cytochrome c oxidase subunit 2 (MT-CO2).